Here is a 297-residue protein sequence, read N- to C-terminus: MSNTSISGSAVALVTPFRQDTSIDTDALRRLVQFHLASGTDILIPCGTTGESPTLCQEEQAAIIRIVKEEAGNHILVAAGAGTNDTRKAVELALNARKAGAEAILSVAPYYNKPSQEGFYQHYRHIAEALDIPVIIYNVPGRTGSNIAAETILRLASDFQNIAAVKEASDNIGQIMELLADRPDHFSVLTGEDTLILPFMAMGGDGVISVAANQVPAEIKQLITLVQEGNLPEARRLNNRLRKLFRLNFIESNPVPVKYALSLMGMIEEVYRLPLLAMEEKHKKILKQELETLGLIS.

Thr49 serves as a coordination point for pyruvate. Catalysis depends on Tyr137, which acts as the Proton donor/acceptor. Lys166 functions as the Schiff-base intermediate with substrate in the catalytic mechanism. Position 208 (Ile208) interacts with pyruvate.

Belongs to the DapA family. In terms of assembly, homotetramer; dimer of dimers.

Its subcellular location is the cytoplasm. The catalysed reaction is L-aspartate 4-semialdehyde + pyruvate = (2S,4S)-4-hydroxy-2,3,4,5-tetrahydrodipicolinate + H2O + H(+). It participates in amino-acid biosynthesis; L-lysine biosynthesis via DAP pathway; (S)-tetrahydrodipicolinate from L-aspartate: step 3/4. Its function is as follows. Catalyzes the condensation of (S)-aspartate-beta-semialdehyde [(S)-ASA] and pyruvate to 4-hydroxy-tetrahydrodipicolinate (HTPA). This Prosthecochloris aestuarii (strain DSM 271 / SK 413) protein is 4-hydroxy-tetrahydrodipicolinate synthase.